We begin with the raw amino-acid sequence, 462 residues long: Integrator complex subunit 12 (462 aa).

Residues 42 to 129 (GIDSSYRPSQ…LEKPETQSSP (88 aa)) are disordered. Polar residues predominate over residues 59–86 (ISSTKNISIKQEPKISSSLPSGNNNGKV). Residue K68 forms a Glycyl lysine isopeptide (Lys-Gly) (interchain with G-Cter in SUMO2) linkage. The segment covering 88-124 (TTEKVKKEAEKRPADKMKSDITEGVDIPKKPRLEKPE) has biased composition (basic and acidic residues). Position 128 is a phosphoserine (S128). A PHD-type zinc finger spans residues 159-215 (GLACVVCRQMMVASGNQLVECQECHNLYHRDCHKPQVTDKEANDPRLVWYCARCTRQ). K254 participates in a covalent cross-link: Glycyl lysine isopeptide (Lys-Gly) (interchain with G-Cter in SUMO2). A compositionally biased stretch (polar residues) spans 301–328 (SSAGPSTAKLSSTTQNSTGKPATSSANQ). Positions 301 to 462 (SSAGPSTAKL…KKAAQKKLKK (162 aa)) are disordered. 2 stretches are compositionally biased toward low complexity: residues 347–358 (KIGSNNSTTPTV) and 396–437 (GNSS…GPTS). Positions 449–462 (QMVKKKAAQKKLKK) are enriched in basic residues.

This sequence belongs to the Integrator subunit 12 family. In terms of assembly, component of the Integrator complex, composed of core subunits INTS1, INTS2, INTS3, INTS4, INTS5, INTS6, INTS7, INTS8, INTS9/RC74, INTS10, INTS11/CPSF3L, INTS12, INTS13, INTS14 and INTS15. The core complex associates with protein phosphatase 2A subunits PPP2CA and PPP2R1A, to form the Integrator-PP2A (INTAC) complex. Dephosphorylated at Ser-128 by the PNUTS-PP1 complex, promoting RNA polymerase II transcription pause-release.

Its subcellular location is the nucleus. Functionally, component of the integrator complex, a multiprotein complex that terminates RNA polymerase II (Pol II) transcription in the promoter-proximal region of genes. The integrator complex provides a quality checkpoint during transcription elongation by driving premature transcription termination of transcripts that are unfavorably configured for transcriptional elongation: the complex terminates transcription by (1) catalyzing dephosphorylation of the C-terminal domain (CTD) of Pol II subunit POLR2A/RPB1 and SUPT5H/SPT5, (2) degrading the exiting nascent RNA transcript via endonuclease activity and (3) promoting the release of Pol II from bound DNA. The integrator complex is also involved in terminating the synthesis of non-coding Pol II transcripts, such as enhancer RNAs (eRNAs), small nuclear RNAs (snRNAs), telomerase RNAs and long non-coding RNAs (lncRNAs). Mediates recruitment of cytoplasmic dynein to the nuclear envelope, probably as component of the integrator complex. In Macaca fascicularis (Crab-eating macaque), this protein is Integrator complex subunit 12 (INTS12).